The chain runs to 173 residues: NADH-quinone oxidoreductase subunit B (173 aa).

Residues Cys-52, Cys-53, Cys-117, and Cys-147 each coordinate [4Fe-4S] cluster.

Belongs to the complex I 20 kDa subunit family. In terms of assembly, NDH-1 is composed of 14 different subunits. Subunits NuoB, C, D, E, F, and G constitute the peripheral sector of the complex. The cofactor is [4Fe-4S] cluster.

Its subcellular location is the cell inner membrane. The enzyme catalyses a quinone + NADH + 5 H(+)(in) = a quinol + NAD(+) + 4 H(+)(out). Functionally, NDH-1 shuttles electrons from NADH, via FMN and iron-sulfur (Fe-S) centers, to quinones in the respiratory chain. Couples the redox reaction to proton translocation (for every two electrons transferred, four hydrogen ions are translocated across the cytoplasmic membrane), and thus conserves the redox energy in a proton gradient. This Pelagibacter ubique (strain HTCC1062) protein is NADH-quinone oxidoreductase subunit B.